The chain runs to 305 residues: Putative ankyrin repeat protein RF_0580 (305 aa).

ANK repeat units lie at residues 5–34, 39–68, 72–101, 107–136, 140–169, 173–202, and 206–235; these read YNKN…NIDE, RGET…SPNI, SGQT…NIDL, CGHS…DINS, FGAS…DVNA, YEDT…DVNI, and NNFT…TIKI.

The protein is Putative ankyrin repeat protein RF_0580 of Rickettsia felis (strain ATCC VR-1525 / URRWXCal2) (Rickettsia azadi).